Here is a 1307-residue protein sequence, read N- to C-terminus: Histone-lysine N-methyltransferase SETDB1 (1307 aa).

Positions 30–65 form a coiled coil; that stretch reads VEELGISMEELRQYIDEELEKMDCIQQRKKQLAELE. A phosphoserine mark is found at Ser112 and Ser117. The residue at position 120 (Thr120) is a Phosphothreonine. Residues 127-148 form a disordered region; the sequence is DEDDDVLSIDSGDAGSRTPKDQ. A Glycyl lysine isopeptide (Lys-Gly) (interchain with G-Cter in SUMO2); alternate cross-link involves residue Lys182. Lys182 is covalently cross-linked (Glycyl lysine isopeptide (Lys-Gly) (interchain with G-Cter in ubiquitin); alternate). 2 consecutive Tudor domains span residues 257 to 320 and 347 to 403; these read KLFV…LKKT and LLKS…SMKT. 3 disordered regions span residues 404 to 424, 444 to 512, and 531 to 570; these read SSAS…PNMG, IQFK…TLSE, and SVTS…AFHG. The span at 454-467 shows a compositional bias: pro residues; that stretch reads PIAPPAPLPIPPLS. Residues 476 to 494 are compositionally biased toward polar residues; the sequence is ESQLAQSRKQVAKKSTSFR. Residues 495-512 are compositionally biased toward low complexity; it reads PGSVGSGHSSPTSSTLSE. A compositionally biased stretch (pro residues) spans 539 to 565; that stretch reads AAPPVPPVPPGPPTPPGPPAPPGPLAP. An MBD domain is found at 611–682; it reads YRGKNPLLVP…EMFCLDPYVL (72 aa). In terms of domain architecture, Pre-SET spans 744–817; the sequence is VGCDCKDGCR…MCTNRLVQHG (74 aa). Zn(2+) contacts are provided by Cys746, Cys748, Cys752, Cys758, Cys760, Cys798, Cys802, Cys804, and Cys809. An SET domain is found at 820–1282; that stretch reads VRLQLFKTQN…AGTELTWDYN (463 aa). Residues 830-832, Asp868, and Tyr870 contribute to the S-adenosyl-L-methionine site; that span reads KGW. Lys884 is covalently cross-linked (Glycyl lysine isopeptide (Lys-Gly) (interchain with G-Cter in ubiquitin)). Residues 885 to 1174 are disordered; sequence EGYESDVPTS…KNLSGPTKRQ (290 aa). Residues 913–924 show a composition bias toward acidic residues; sequence EDPEESNDDSSD. Over residues 950 to 966 the composition is skewed to basic and acidic residues; it reads GQKENELSEMTSKDSRP. Ser1042 carries the phosphoserine modification. A compositionally biased stretch (basic and acidic residues) spans 1048–1066; sequence FKDEGDNKQPKKEDPENRN. Lys1049 is covalently cross-linked (Glycyl lysine isopeptide (Lys-Gly) (interchain with G-Cter in SUMO2); alternate). Residue Lys1049 forms a Glycyl lysine isopeptide (Lys-Gly) (interchain with G-Cter in SUMO1); alternate linkage. Glycyl lysine isopeptide (Lys-Gly) (interchain with G-Cter in SUMO2) cross-links involve residues Lys1055 and Lys1085. The span at 1097–1112 shows a compositional bias: polar residues; it reads SVLQSQRVVTSTQSNP. Positions 1116–1131 are enriched in low complexity; that stretch reads LTLSSSTESEGESGTS. Positions 1137–1156 are enriched in polar residues; the sequence is GHTSATAVDSDDIQTISSGS. Lys1165 participates in a covalent cross-link: Glycyl lysine isopeptide (Lys-Gly) (interchain with G-Cter in SUMO2). N6,N6,N6-trimethyllysine; alternate is present on residues Lys1186 and Lys1194. Residues Lys1186 and Lys1194 each carry the N6,N6-dimethyllysine; alternate modification. Residues Arg1236 and 1239–1240 contribute to the S-adenosyl-L-methionine site; that span reads NH. 4 residues coordinate Zn(2+): Cys1242, Cys1295, Cys1297, and Cys1302. One can recognise a Post-SET domain in the interval 1291–1307; that stretch reads KELLCCCGAIECRGRLL.

This sequence belongs to the class V-like SAM-binding methyltransferase superfamily. Histone-lysine methyltransferase family. Suvar3-9 subfamily. As to quaternary structure, part of a complex containing at least CDYL, REST, WIZ, SETDB1, EHMT1 and EHMT2. Forms a complex with ATRX, TRIM28 and ZNF274. Probably part of a corepressor complex containing ZNF304, TRIM28, SETDB1 and DNMT1. Interacts with TRIM28/TIF1B. Interacts with ATF7IP and ATF7IP2; the interaction with ATF7IP is required to stimulate histone methyltransferase activity and facilitate the conversion of dimethylated to trimethylated H3 'Lys-9'. Interacts with MBD1; interaction is abolished when MBD1 is sumoylated. Interacts with CBX1 and CBX5. Interacts with DNMT3A and DNMT3B. Interacts with SUMO2. Interacts with MPHOSPH8. Interacts with ERG. Interacts with HDAC1, HDAC2, SIN3A, SIN3B. Interacts with ATRX. Interacts with RESF1. Interacts with ZNF638. Interacts with TASOR. Interacts with ZNF263; recruited to the SIX3 promoter along with other proteins involved in chromatin modification and transcriptional corepression where it contributes to transcriptional repression. Interacts with PHF13; the interaction probably enhances SETDB1 chromatin-associated levels and activity. Interacts with VRK1. Post-translationally, degraded by the proteasome, shielded by interaction with ATF7IP. Monoubiquitinated at Lys-884 by E2 enzymes UBE2E family. The conjugated-Ub is protected from deubiquitination through the SET domain. Monoubiquitination at Lys-884 is required for catalytic activity and H3K9 methylation and endogenous retrovirus silencing. As to expression, ubiquitously expressed. Strong expression in liver and testis. Expressed in the brain, lungs, kidneys, uterus and seminal vesicles.

The protein resides in the nucleus. Its subcellular location is the chromosome. It carries out the reaction N(6),N(6)-dimethyl-L-lysyl(9)-[histone H3] + S-adenosyl-L-methionine = N(6),N(6),N(6)-trimethyl-L-lysyl(9)-[histone H3] + S-adenosyl-L-homocysteine + H(+). Its function is as follows. Histone methyltransferase that specifically trimethylates 'Lys-9' of histone H3. H3 'Lys-9' trimethylation represents a specific tag for epigenetic transcriptional repression by recruiting HP1 (CBX1, CBX3 and/or CBX5) proteins to methylated histones. Mainly functions in euchromatin regions, thereby playing a central role in the silencing of euchromatic genes. H3 'Lys-9' trimethylation is coordinated with DNA methylation. Probably forms a complex with MBD1 and ATF7IP that represses transcription and couples DNA methylation and histone 'Lys-9' trimethylation. Its activity is dependent on MBD1 and is heritably maintained through DNA replication by being recruited by CAF-1. SETDB1 is targeted to histone H3 by TRIM28/TIF1B, a factor recruited by KRAB zinc-finger proteins. Probably forms a corepressor complex required for activated KRAS-mediated promoter hypermethylation and transcriptional silencing of tumor suppressor genes (TSGs) or other tumor-related genes in colorectal cancer (CRC) cells. Required to maintain a transcriptionally repressive state of genes in undifferentiated embryonic stem cells (ESCs). In ESCs, in collaboration with TRIM28, is also required for H3K9me3 and silencing of endogenous and introduced retroviruses in a DNA-methylation independent-pathway. Associates at promoter regions of tumor suppressor genes (TSGs) leading to their gene silencing. The SETDB1-TRIM28-ZNF274 complex may play a role in recruiting ATRX to the 3'-exons of zinc-finger coding genes with atypical chromatin signatures to establish or maintain/protect H3K9me3 at these transcriptionally active regions. In Mus musculus (Mouse), this protein is Histone-lysine N-methyltransferase SETDB1.